The chain runs to 151 residues: Deoxyuridine 5'-triphosphate nucleotidohydrolase (151 aa).

Residues 70-72 (RSG), N83, and 87-89 (LID) each bind substrate.

It belongs to the dUTPase family. Requires Mg(2+) as cofactor.

The catalysed reaction is dUTP + H2O = dUMP + diphosphate + H(+). It participates in pyrimidine metabolism; dUMP biosynthesis; dUMP from dCTP (dUTP route): step 2/2. Functionally, this enzyme is involved in nucleotide metabolism: it produces dUMP, the immediate precursor of thymidine nucleotides and it decreases the intracellular concentration of dUTP so that uracil cannot be incorporated into DNA. The chain is Deoxyuridine 5'-triphosphate nucleotidohydrolase from Methylococcus capsulatus (strain ATCC 33009 / NCIMB 11132 / Bath).